The sequence spans 92 residues: UPF0358 protein Exig_1994 (92 aa).

The protein belongs to the UPF0358 family.

The protein is UPF0358 protein Exig_1994 of Exiguobacterium sibiricum (strain DSM 17290 / CCUG 55495 / CIP 109462 / JCM 13490 / 255-15).